Here is a 712-residue protein sequence, read N- to C-terminus: Cyclolysin secretion/processing ATP-binding protein CyaB (712 aa).

Residues 7–128 (QCASVPDSGL…ALWAGELLLC (122 aa)) form the Peptidase C39 domain. The region spanning 157–439 (IGEVLLISLV…LAQLWNDFQQ (283 aa)) is the ABC transmembrane type-1 domain. Transmembrane regions (helical) follow at residues 160 to 180 (VLLISLVLQFIALLTPLFFQV), 194 to 214 (LNVIAVGFLAAILFEALLTGI), 272 to 292 (AVTVLLDVVFSVVFIAVMFFY), 298 to 318 (LVVLAALPCYFLLSLVLTPVL), 367 to 387 (VAAGLSVANVAMLANTGVTLI), and 390 to 410 (LVALGVLWVGATEVVAQRMTV). The ABC transporter domain occupies 471 to 706 (IELDRVSFRY…GGLYARLQAL (236 aa)). 505–512 (GRSGSGKS) contributes to the ATP binding site.

This sequence belongs to the ABC transporter superfamily. Cyclolysin exporter (TC 3.A.1.109.2) family.

It is found in the cell membrane. Its function is as follows. Involved in the export of calmodulin-sensitive adenylate cyclase-hemolysin (cyclolysin). The polypeptide is Cyclolysin secretion/processing ATP-binding protein CyaB (cyaB) (Bordetella pertussis (strain Tohama I / ATCC BAA-589 / NCTC 13251)).